The primary structure comprises 198 residues: Ribonuclease HII (198 aa).

The region spanning 11 to 198 is the RNase H type-2 domain; that stretch reads ELIAGVDEVG…SPVRKLLENE (188 aa). Asp17, Glu18, and Asp109 together coordinate a divalent metal cation.

The protein belongs to the RNase HII family. Requires Mn(2+) as cofactor. Mg(2+) is required as a cofactor.

The protein localises to the cytoplasm. It carries out the reaction Endonucleolytic cleavage to 5'-phosphomonoester.. Functionally, endonuclease that specifically degrades the RNA of RNA-DNA hybrids. In Mannheimia succiniciproducens (strain KCTC 0769BP / MBEL55E), this protein is Ribonuclease HII.